A 142-amino-acid polypeptide reads, in one-letter code: Coactosin-like protein (142 aa).

Position 2 is an N-acetylalanine (alanine 2). Residues 2–130 (ATKIDKEACR…EEDFIKSELK (129 aa)) enclose the ADF-H domain. The flexible and important for F-actin binding stretch occupies residues 66 to 75 (TGDAMSKRSK). Lysine 102 and lysine 126 each carry N6-acetyllysine.

It belongs to the actin-binding proteins ADF family. Coactosin subfamily. Interacts with 5-lipoxygenase (ALOX5/5LO) in a calcium-independent manner. Binds to F-actin with a stoichiometry of 1:2. Widely expressed with highest levels in placenta, lung, kidney and peripheral blood leukocytes and lower levels in brain, liver and pancreas.

The protein resides in the cytoplasm. The protein localises to the cytoskeleton. It localises to the nucleus. In terms of biological role, binds to F-actin in a calcium-independent manner. Has no direct effect on actin depolymerization. Acts as a chaperone for ALOX5 (5LO), influencing both its stability and activity in leukotrienes synthesis. The sequence is that of Coactosin-like protein (COTL1) from Homo sapiens (Human).